A 353-amino-acid chain; its full sequence is Glycerol-3-phosphate dehydrogenase [NAD(P)+] (353 aa).

NADPH is bound by residues Trp11, Arg40, and Lys115. 3 residues coordinate sn-glycerol 3-phosphate: Lys115, Gly156, and Ser158. Ala160 is a binding site for NADPH. Positions 211, 264, 274, 275, and 276 each coordinate sn-glycerol 3-phosphate. The active-site Proton acceptor is Lys211. Arg275 contacts NADPH. NADPH is bound by residues Val299 and Glu301.

This sequence belongs to the NAD-dependent glycerol-3-phosphate dehydrogenase family.

Its subcellular location is the cytoplasm. It catalyses the reaction sn-glycerol 3-phosphate + NAD(+) = dihydroxyacetone phosphate + NADH + H(+). The catalysed reaction is sn-glycerol 3-phosphate + NADP(+) = dihydroxyacetone phosphate + NADPH + H(+). Its pathway is membrane lipid metabolism; glycerophospholipid metabolism. Functionally, catalyzes the reduction of the glycolytic intermediate dihydroxyacetone phosphate (DHAP) to sn-glycerol 3-phosphate (G3P), the key precursor for phospholipid synthesis. In Polaromonas sp. (strain JS666 / ATCC BAA-500), this protein is Glycerol-3-phosphate dehydrogenase [NAD(P)+].